The following is a 298-amino-acid chain: Ribosomal protein uL3 glutamine methyltransferase (298 aa).

The protein belongs to the protein N5-glutamine methyltransferase family. PrmB subfamily.

It catalyses the reaction L-glutaminyl-[ribosomal protein uL3] + S-adenosyl-L-methionine = N(5)-methyl-L-glutaminyl-[ribosomal protein uL3] + S-adenosyl-L-homocysteine + H(+). Methylates large ribosomal subunit protein uL3 on a specific glutamine residue. The protein is Ribosomal protein uL3 glutamine methyltransferase of Bordetella pertussis (strain Tohama I / ATCC BAA-589 / NCTC 13251).